Reading from the N-terminus, the 505-residue chain is MSTAPNAKNNISLKKSVGDVWPLTAKRVLMRVDFNVPMQNGHITNDYRIRAAIPTIRRVIDQGGICILLSHLGRPRGVSMVAGVRDIRRRYHEAQFHDNKGKTAFFSVLPGEEKVKILAKSSAREEATHISPEVKSGKTMLFARLPEDEKKSLLMQYLNENKDSALPQMSVSAGYEEQYSLRPVAVRLAELLGQHVYFAHDCLDARVEVSRLKRGNVMLLENVRFYSEENGENAEEREAMAKILASYGDVYISDAFGAAHRDSATMTGIPKILGHGAAGYLMEKEISYFAKVLGNPPRPLEAIVGGAKVSEKIQLLDNMKQRIDYLLIGGAMAYTFLKAQGYSIGKSKCEESKLEFARSLLKKAEDRKVQVILPIDHVCHTEFKAVDSPLITEDQNIPEGHMALDIGPKTIEKYVQTIGKCKSAIWNGPMGVFEMVPYSKGTFAIAKAMGRGTQKRGLMSIIGGGESAGAAEAARISHVSTGGGASLELLEGKTLPGVAVLDDKE.

(2R)-3-phosphoglycerate-binding residues include Val-32, Asp-33, Phe-34, Asn-35, Arg-48, Ser-70, His-71, Gly-73, Arg-74, Arg-224, His-260, and Arg-261. 2 residues coordinate ADP: Gly-306 and Ala-307. CDP is bound at residue Gly-306. Positions 307 and 308 each coordinate AMP. Ala-307 is an ATP binding site. Ala-307 is a Mg(2+) binding site. Position 308 (Lys-308) interacts with (2R)-3-phosphoglycerate. Residue Glu-311 coordinates CDP. Glu-311 is a Mg(2+) binding site. Lys-312 and Gly-330 together coordinate ADP. Lys-312 is a binding site for AMP. Residue Lys-312 coordinates ATP. Gly-330 lines the CDP pocket. Residues Ala-331 and Ala-403 each contribute to the AMP site. The ATP site is built by Ala-331 and Ala-403. Ala-403 and Asn-427 together coordinate ADP. Residues Gly-428 and Phe-433 each contribute to the CDP site. 4 residues coordinate ADP: Phe-433, Glu-434, Glu-466, and Ser-467. Glu-434 contacts AMP. 3 residues coordinate ATP: Glu-434, Glu-466, and Ser-467. Glu-466 provides a ligand contact to Mg(2+).

The protein belongs to the phosphoglycerate kinase family. Monomer. Mg(2+) is required as a cofactor.

The catalysed reaction is (2R)-3-phosphoglycerate + ATP = (2R)-3-phospho-glyceroyl phosphate + ADP. It functions in the pathway carbohydrate degradation; glycolysis; pyruvate from D-glyceraldehyde 3-phosphate: step 2/5. In Trypanosoma brucei brucei, this protein is Phosphoglycerate kinase A.